The sequence spans 122 residues: Acidic phospholipase A2 1 (122 aa).

Intrachain disulfides connect C26–C115, C28–C44, C43–C94, C49–C122, C50–C87, C57–C81, and C75–C85. Y27, G29, and G31 together coordinate Ca(2+). H47 is an active-site residue. Position 48 (D48) interacts with Ca(2+). Residue D88 is part of the active site.

This sequence belongs to the phospholipase A2 family. Group II subfamily. D49 sub-subfamily. In terms of assembly, homodimer. Requires Ca(2+) as cofactor. In terms of tissue distribution, expressed by the venom gland.

It is found in the secreted. It catalyses the reaction a 1,2-diacyl-sn-glycero-3-phosphocholine + H2O = a 1-acyl-sn-glycero-3-phosphocholine + a fatty acid + H(+). Functionally, PLA2 catalyzes the calcium-dependent hydrolysis of the 2-acyl groups in 3-sn-phosphoglycerides. In Protobothrops mucrosquamatus (Taiwan habu), this protein is Acidic phospholipase A2 1.